Reading from the N-terminus, the 130-residue chain is Bet1-like SNARE 1-2 (130 aa).

Over 1–106 (MNFRRENRAS…EKKSNRKSCK (106 aa)) the chain is Cytoplasmic. In terms of domain architecture, t-SNARE coiled-coil homology spans 33-95 (AHDERDNDEA…SGTINRFKLV (63 aa)). A coiled-coil region spans residues 40–82 (DEALENLQDRVSFLKRVTGDIHEEVENHNRLLDKVGNKMDSAR). The chain crosses the membrane as a helical; Anchor for type IV membrane protein span at residues 107–122 (LIAYFVLLFLIMYYLI). At 123–130 (RLLNYIKG) the chain is on the vesicular side.

The protein belongs to the BET1 family.

Its subcellular location is the golgi apparatus membrane. It is found in the endoplasmic reticulum membrane. In terms of biological role, required for vesicular transport from the ER to the Golgi complex. Functions as a SNARE associated with ER-derived vesicles. This chain is Bet1-like SNARE 1-2 (BET12), found in Arabidopsis thaliana (Mouse-ear cress).